We begin with the raw amino-acid sequence, 376 residues long: N-acetyldiaminopimelate deacetylase (376 aa).

Asp-69 is a catalytic residue. Glu-128 (proton acceptor) is an active-site residue.

It belongs to the peptidase M20A family. N-acetyldiaminopimelate deacetylase subfamily.

The enzyme catalyses N-acetyl-(2S,6S)-2,6-diaminopimelate + H2O = (2S,6S)-2,6-diaminopimelate + acetate. The protein operates within amino-acid biosynthesis; L-lysine biosynthesis via DAP pathway; LL-2,6-diaminopimelate from (S)-tetrahydrodipicolinate (acetylase route): step 3/3. Its function is as follows. Catalyzes the conversion of N-acetyl-diaminopimelate to diaminopimelate and acetate. This Streptococcus pneumoniae (strain 70585) protein is N-acetyldiaminopimelate deacetylase.